Here is a 157-residue protein sequence, read N- to C-terminus: Cell number regulator 10 (157 aa).

A run of 2 helical transmembrane segments spans residues 41–57 (DCGL…ITFG) and 66–83 (GATS…LAYF).

The protein belongs to the cornifelin family. As to expression, expressed in roots, leaves, stalks, immature ears and silks.

Its subcellular location is the membrane. This is Cell number regulator 10 (CNR10) from Zea mays (Maize).